We begin with the raw amino-acid sequence, 378 residues long: Dual-specificity RNA methyltransferase RlmN 2 (378 aa).

Glu-113 functions as the Proton acceptor in the catalytic mechanism. In terms of domain architecture, Radical SAM core spans 119-355 (TEDRRTLCVS…AAYIRRNRGR (237 aa)). An intrachain disulfide couples Cys-126 to Cys-361. Positions 133, 137, and 140 each coordinate [4Fe-4S] cluster. Residues 188 to 189 (GE), Ser-220, 242 to 244 (SLN), and Asn-318 each bind S-adenosyl-L-methionine. Cys-361 (S-methylcysteine intermediate) is an active-site residue.

It belongs to the radical SAM superfamily. RlmN family. It depends on [4Fe-4S] cluster as a cofactor.

The protein resides in the cytoplasm. The enzyme catalyses adenosine(2503) in 23S rRNA + 2 reduced [2Fe-2S]-[ferredoxin] + 2 S-adenosyl-L-methionine = 2-methyladenosine(2503) in 23S rRNA + 5'-deoxyadenosine + L-methionine + 2 oxidized [2Fe-2S]-[ferredoxin] + S-adenosyl-L-homocysteine. It catalyses the reaction adenosine(37) in tRNA + 2 reduced [2Fe-2S]-[ferredoxin] + 2 S-adenosyl-L-methionine = 2-methyladenosine(37) in tRNA + 5'-deoxyadenosine + L-methionine + 2 oxidized [2Fe-2S]-[ferredoxin] + S-adenosyl-L-homocysteine. Its function is as follows. Specifically methylates position 2 of adenine 2503 in 23S rRNA and position 2 of adenine 37 in tRNAs. m2A2503 modification seems to play a crucial role in the proofreading step occurring at the peptidyl transferase center and thus would serve to optimize ribosomal fidelity. This Myxococcus xanthus (strain DK1622) protein is Dual-specificity RNA methyltransferase RlmN 2.